The primary structure comprises 434 residues: Probable phosphatidylinositol 3,4,5-trisphosphate 3-phosphatase TEP1 (434 aa).

The Phosphatase tensin-type domain occupies Lys33–Glu255. Cys193 acts as the Phosphocysteine intermediate in catalysis.

The enzyme catalyses a 1,2-diacyl-sn-glycero-3-phospho-(1D-myo-inositol-3,4,5-trisphosphate) + H2O = a 1,2-diacyl-sn-glycero-3-phospho-(1D-myo-inositol-4,5-bisphosphate) + phosphate. Its function is as follows. May act as a phosphoinositide 3-phosphatase by regulating PtdIns(3,4,5)P3 levels. In Saccharomyces cerevisiae (strain ATCC 204508 / S288c) (Baker's yeast), this protein is Probable phosphatidylinositol 3,4,5-trisphosphate 3-phosphatase TEP1 (TEP1).